The primary structure comprises 578 residues: Tetratricopeptide repeat protein ttc-39B (578 aa).

3 TPR repeats span residues 297–330 (AIML…QDVY), 481–514 (CLYY…ESSI), and 522–554 (PNAT…YKSY).

The protein is Tetratricopeptide repeat protein ttc-39B of Caenorhabditis elegans.